Reading from the N-terminus, the 348-residue chain is Phospho-2-dehydro-3-deoxyheptonate aldolase, Trp-sensitive (348 aa).

It belongs to the class-I DAHP synthase family.

The enzyme catalyses D-erythrose 4-phosphate + phosphoenolpyruvate + H2O = 7-phospho-2-dehydro-3-deoxy-D-arabino-heptonate + phosphate. The protein operates within metabolic intermediate biosynthesis; chorismate biosynthesis; chorismate from D-erythrose 4-phosphate and phosphoenolpyruvate: step 1/7. Stereospecific condensation of phosphoenolpyruvate (PEP) and D-erythrose-4-phosphate (E4P) giving rise to 3-deoxy-D-arabino-heptulosonate-7-phosphate (DAHP). The polypeptide is Phospho-2-dehydro-3-deoxyheptonate aldolase, Trp-sensitive (aroH) (Buchnera aphidicola subsp. Schizaphis graminum (strain Sg)).